Reading from the N-terminus, the 98-residue chain is Large ribosomal subunit protein eL30 (98 aa).

The protein belongs to the eukaryotic ribosomal protein eL30 family.

This Methanosphaera stadtmanae (strain ATCC 43021 / DSM 3091 / JCM 11832 / MCB-3) protein is Large ribosomal subunit protein eL30.